The primary structure comprises 146 residues: Neuropeptide Y receptor type 2 (146 aa).

Topologically, residues 1-8 (KMGPVLCH) are extracellular. The cysteines at positions 7 and 87 are disulfide-linked. Residues 9–29 (LVPYAQGLAVQVSTITLTVIA) form a helical membrane-spanning segment. Residues 30-49 (LDRHRCIVYHLESKISKQIS) lie on the Cytoplasmic side of the membrane. The helical transmembrane segment at 50–70 (FLIIGLAWGVSALLASPLAIF) threads the bilayer. The Extracellular portion of the chain corresponds to 71 to 100 (REYSLIEIIPDFEIVACTEKWPGEEKGIYG). Residues 101–121 (TVYSLLSLLILYVLPLGIISF) form a helical membrane-spanning segment. The Cytoplasmic portion of the chain corresponds to 122–146 (SYARIWSKLKNHVSPGAAHDHYHQR).

Belongs to the G-protein coupled receptor 1 family.

Its subcellular location is the cell membrane. Receptor for neuropeptide Y and peptide YY. The protein is Neuropeptide Y receptor type 2 (NPY2R) of Ovis aries (Sheep).